We begin with the raw amino-acid sequence, 254 residues long: MIRILLSNDDGISAPGIQTLASALREFAQVQIVAPDRNRSGASNALTLDSALRITTLSNGDIAVQQGTPTDCVYLGVNALMRPRPDIVVSGINAGPNLGDDVIYSGTVAAAMEGRHLGYPALAVSLNGHQHYDTAAAVTCRLLRALQRKPLRTGKILNINVPDLPLSEIKGIRVTRCGSRHPAEQVFCQQDPRGQDLYWIGPPGEKYDAGPDTDFAAVEQGYVSITPLQVDLTAYTAQEVVESWLANTEVDGEW.

4 residues coordinate a divalent metal cation: D9, D10, S40, and N93.

The protein belongs to the SurE nucleotidase family. A divalent metal cation serves as cofactor.

It is found in the cytoplasm. It catalyses the reaction a ribonucleoside 5'-phosphate + H2O = a ribonucleoside + phosphate. The catalysed reaction is a ribonucleoside 3'-phosphate + H2O = a ribonucleoside + phosphate. It carries out the reaction [phosphate](n) + H2O = [phosphate](n-1) + phosphate + H(+). In terms of biological role, nucleotidase with a broad substrate specificity as it can dephosphorylate various ribo- and deoxyribonucleoside 5'-monophosphates and ribonucleoside 3'-monophosphates with highest affinity to 3'-AMP. Also hydrolyzes polyphosphate (exopolyphosphatase activity) with the preference for short-chain-length substrates (P20-25). Might be involved in the regulation of dNTP and NTP pools, and in the turnover of 3'-mononucleotides produced by numerous intracellular RNases (T1, T2, and F) during the degradation of various RNAs. The protein is 5'/3'-nucleotidase SurE of Yersinia pseudotuberculosis serotype O:1b (strain IP 31758).